Here is a 166-residue protein sequence, read N- to C-terminus: Probable protein tyrosine phosphatase type IVA A (166 aa).

Residues 10 to 164 enclose the Tyrosine-protein phosphatase domain; the sequence is NPASLVESST…YKSKKKSSCR (155 aa). Residues Cys52 and Cys107 are joined by a disulfide bond. Asp75 functions as the Proton donor in the catalytic mechanism. The active-site Phosphocysteine intermediate is Cys107. 108 to 113 lines the phosphate pocket; that stretch reads VAGLGR. Arg113 lines the substrate pocket. Cysteine methyl ester is present on Cys163. A lipid anchor (S-farnesyl cysteine) is attached at Cys163. Residues 164–166 constitute a propeptide, removed in mature form; the sequence is RIM.

It belongs to the protein-tyrosine phosphatase family.

It localises to the membrane. It catalyses the reaction O-phospho-L-tyrosyl-[protein] + H2O = L-tyrosyl-[protein] + phosphate. This Dictyostelium discoideum (Social amoeba) protein is Probable protein tyrosine phosphatase type IVA A.